The chain runs to 630 residues: A disintegrin and metalloproteinase with thrombospondin motifs 4 (630 aa).

A propeptide spanning residues 1 to 5 is cleaved from the precursor; sequence RRTKR. The region spanning 11 to 221 is the Peptidase M12B domain; the sequence is RFVETLVVAD…GYGHCLLDKP (211 aa). 11 cysteine pairs are disulfide-bonded: C86–C138, C115–C120, C132–C216, C170–C200, C242–C265, C253–C275, C260–C294, C288–C299, C325–C362, C329–C367, and C340–C352. An N-linked (GlcNAc...) asparagine glycan is attached at N96. A Zn(2+)-binding site is contributed by H154. E155 is a catalytic residue. Zn(2+) contacts are provided by H158 and H164. One can recognise a Disintegrin domain in the interval 233–303; it reads GKDYDADRQC…CMGGRCLHVD (71 aa). Residues 313–368 enclose the TSP type-1 domain; it reads AGGWGPWGPWGDCSRTCGGGVQFSSRDCTKPVPRNGGKYCEGRRTPFRSCNTKNCP. Residue N474 is glycosylated (N-linked (GlcNAc...) asparagine). The interval 479 to 630 is spacer; sequence SKQSGSFKKF…LRKRTWAGRK (152 aa).

Interacts with SRPX2. Requires Zn(2+) as cofactor. The precursor is cleaved by a furin endopeptidase. In terms of processing, glycosylated. Can be O-fucosylated by POFUT2 on a serine or a threonine residue found within the consensus sequence C1-X(2)-(S/T)-C2-G of the TSP type-1 repeat domains where C1 and C2 are the first and second cysteine residue of the repeat, respectively. Fucosylated repeats can then be further glycosylated by the addition of a beta-1,3-glucose residue by the glucosyltransferase, B3GALTL. Fucosylation mediates the efficient secretion of ADAMTS family members. Can also be C-glycosylated with one or two mannose molecules on tryptophan residues within the consensus sequence W-X-X-W of the TPRs, and N-glycosylated. These other glycosylations can also facilitate secretion. Brain specific.

Its subcellular location is the secreted. It is found in the extracellular space. The protein resides in the extracellular matrix. The enzyme catalyses Glutamyl endopeptidase. Bonds cleaved include 370-Thr-Glu-Gly-Glu-|-Ala-Arg-Gly-Ser-377 in the interglobular domain of mammalian aggrecan.. Cleaves aggrecan, a cartilage proteoglycan, at the '392-Glu-|-Ala-393' site and may be involved in its turnover. Also cleaves COMP. May play an important role in the destruction of aggrecan in arthritic diseases. This is A disintegrin and metalloproteinase with thrombospondin motifs 4 (Adamts4) from Rattus norvegicus (Rat).